The following is a 510-amino-acid chain: Inner membrane protein YeeR (510 aa).

Position 1 (Met-1) is a topological domain, cytoplasmic. A helical membrane pass occupies residues 2-22 (LQIVGALILLIAGFAILRLLF). The Periplasmic portion of the chain corresponds to 23–30 (RALISTAS). The chain crosses the membrane as a helical span at residues 31–51 (ALAGLILLCLFGPALLAGYIT). The Cytoplasmic segment spans residues 52-61 (ERITRLFHIR). A helical membrane pass occupies residues 62–82 (WLAGVFLTIAGMIISFMWGLD). The Periplasmic segment spans residues 83-94 (GKHIALEAHTFD). A helical transmembrane segment spans residues 95–115 (SVKFILTTALAGGLLAVPLQI). Residues 116 to 136 (KNIQQNGITPEDISKEINGYY) are Cytoplasmic-facing. Residues 137–157 (CCFYTAFFLMACSACAPLIAL) form a helical membrane-spanning segment. Topologically, residues 158–164 (QYDISPS) are periplasmic. A helical membrane pass occupies residues 165–185 (LMWWGGLLYWLAALVTLLWAA). Topologically, residues 186–510 (SQIQALKKLT…KIREGKVEER (325 aa)) are cytoplasmic.

Its subcellular location is the cell inner membrane. This Escherichia coli (strain K12) protein is Inner membrane protein YeeR (yeeR).